A 158-amino-acid chain; its full sequence is Large ribosomal subunit protein bL17 (158 aa).

A disordered region spans residues 119–158 (APAAAPEAEEKGEKKAAKAPKAEKAPKAEKKPAKKAAKAE). Positions 126 to 158 (AEEKGEKKAAKAPKAEKAPKAEKKPAKKAAKAE) are enriched in basic and acidic residues.

Belongs to the bacterial ribosomal protein bL17 family. Part of the 50S ribosomal subunit. Contacts protein L32.

The protein is Large ribosomal subunit protein bL17 of Anaeromyxobacter sp. (strain K).